Here is an 82-residue protein sequence, read N- to C-terminus: Sodium channel neurotoxin MeuNaTxalpha-3 (82 aa).

The first 8 residues, 1–8 (LVMAGVES), serve as a signal peptide directing secretion. The LCN-type CS-alpha/beta domain occupies 10-80 (RDGHIARNNN…VPIKVPGDCH (71 aa)). Cystine bridges form between cysteine 20/cysteine 79, cysteine 24/cysteine 52, cysteine 38/cysteine 62, and cysteine 42/cysteine 64.

In terms of tissue distribution, expressed by the venom gland.

The protein resides in the secreted. Alpha toxins bind voltage-independently at site-3 of sodium channels (Nav) and inhibit the inactivation of the activated channels, thereby blocking neuronal transmission. This Mesobuthus eupeus (Lesser Asian scorpion) protein is Sodium channel neurotoxin MeuNaTxalpha-3.